The following is a 353-amino-acid chain: Photosystem II protein D1 (353 aa).

An N-acetylthreonine modification is found at Thr2. Position 2 is a phosphothreonine (Thr2). The next 3 helical transmembrane spans lie at 29 to 46 (YIGW…TATS), 118 to 133 (HFLL…EWEL), and 142 to 156 (WIAV…AATA). His118 contacts chlorophyll a. Tyr126 is a pheophytin a binding site. The [CaMn4O5] cluster site is built by Asp170 and Glu189. Residues 197–218 (FHMLGVAGVFGGSLFSAMHGSL) form a helical membrane-spanning segment. His198 contacts chlorophyll a. Residues His215 and 264 to 265 (SF) contribute to the a quinone site. His215 lines the Fe cation pocket. Position 272 (His272) interacts with Fe cation. Residues 274-288 (FLAAWPVVGIWFTAL) traverse the membrane as a helical segment. Residues His332, Glu333, Asp342, and Ala344 each coordinate [CaMn4O5] cluster. A propeptide spanning residues 345 to 353 (SVEAPSTNG) is cleaved from the precursor.

Belongs to the reaction center PufL/M/PsbA/D family. In terms of assembly, PSII is composed of 1 copy each of membrane proteins PsbA, PsbB, PsbC, PsbD, PsbE, PsbF, PsbH, PsbI, PsbJ, PsbK, PsbL, PsbM, PsbT, PsbX, PsbY, PsbZ, Psb30/Ycf12, at least 3 peripheral proteins of the oxygen-evolving complex and a large number of cofactors. It forms dimeric complexes. Requires The D1/D2 heterodimer binds P680, chlorophylls that are the primary electron donor of PSII, and subsequent electron acceptors. It shares a non-heme iron and each subunit binds pheophytin, quinone, additional chlorophylls, carotenoids and lipids. D1 provides most of the ligands for the Mn4-Ca-O5 cluster of the oxygen-evolving complex (OEC). There is also a Cl(-1) ion associated with D1 and D2, which is required for oxygen evolution. The PSII complex binds additional chlorophylls, carotenoids and specific lipids. as cofactor. Tyr-161 forms a radical intermediate that is referred to as redox-active TyrZ, YZ or Y-Z. In terms of processing, C-terminally processed by CTPA; processing is essential to allow assembly of the oxygen-evolving complex and thus photosynthetic growth.

It is found in the plastid. The protein resides in the chloroplast thylakoid membrane. The catalysed reaction is 2 a plastoquinone + 4 hnu + 2 H2O = 2 a plastoquinol + O2. In terms of biological role, photosystem II (PSII) is a light-driven water:plastoquinone oxidoreductase that uses light energy to abstract electrons from H(2)O, generating O(2) and a proton gradient subsequently used for ATP formation. It consists of a core antenna complex that captures photons, and an electron transfer chain that converts photonic excitation into a charge separation. The D1/D2 (PsbA/PsbD) reaction center heterodimer binds P680, the primary electron donor of PSII as well as several subsequent electron acceptors. This Acorus calamus (Sweet flag) protein is Photosystem II protein D1.